The sequence spans 344 residues: Ureide permease 3 (344 aa).

Over 1–10 (MYVIESKGGT) the chain is Extracellular. A helical transmembrane segment spans residues 11 to 31 (ITCMLLALLFLGTWPAIMTLT). Residues 32–42 (ERRGRLPQHTY) lie on the Cytoplasmic side of the membrane. A helical transmembrane segment spans residues 43-63 (LDYTLTNLLAAVIIAFTLGEI). Over 64–78 (SPSRPNFTTQLSQDN) the chain is Extracellular. The helical transmembrane segment at 79–99 (WPSVMFAMAGGIFLSLGTLAT) threads the bilayer. The Cytoplasmic portion of the chain corresponds to 100–101 (QY). The helical transmembrane segment at 102–122 (AWAFVGLSVTEVITASIAVVI) threads the bilayer. Topologically, residues 123–136 (GTTLNYFLDDRINR) are extracellular. The helical transmembrane segment at 137–157 (AEVLFPGVACFLIAVCFGSAV) threads the bilayer. Over 158 to 208 (HKSNAADNKSKLQGFKSLETTSSFQMETSSIKEGKAKVGTADFLIEVEKQR) the chain is Cytoplasmic. ATP is bound at residue 209 to 216 (AIKVFGKS). A helical membrane pass occupies residues 209–229 (AIKVFGKSTIIGLAITFFAVP). Residues 230 to 235 (KLNVYT) lie on the Extracellular side of the membrane. A helical transmembrane segment spans residues 236–256 (AFFYFSISSFGVGLILNIIFL). The Cytoplasmic segment spans residues 257–278 (YWPILGLPRSSFKAYLNDWNGR). The chain crosses the membrane as a helical span at residues 279–299 (GWSFLAGFLCGFGNGLQFMGG). Over 300–344 (QAAGYAAAGAVQIENKHFGGYCCLENTKDHQEKHIHFLSVCYLCS) the chain is Extracellular.

The protein belongs to the plant ureide permease (TC 2.A.7.19) family.

Its subcellular location is the membrane. Functionally, proton-coupled transporter that transports a wide spectrum of oxo derivatives of heterocyclic nitrogen compounds. In Arabidopsis thaliana (Mouse-ear cress), this protein is Ureide permease 3.